A 1215-amino-acid chain; its full sequence is Pesticidal crystal protein Cry1Ka (1215 aa).

This sequence belongs to the delta endotoxin family.

Functionally, promotes colloidosmotic lysis by binding to the midgut epithelial cells of insects. Selectively toxic to Artogeia rapae but not active on Plutella xylostella. This is Pesticidal crystal protein Cry1Ka (cry1Ka) from Bacillus thuringiensis subsp. morrisoni.